The primary structure comprises 410 residues: Voltage-dependent chloride channel 2, chloroplastic (410 aa).

At 1–110 (MYQSMNLSFS…RHVSSSPSSR (110 aa)) the chain is on the lumenal, thylakoid side. A helical transmembrane segment spans residues 111–131 (VILSLIPPVFFFTTVAILIAG). The Stromal portion of the chain corresponds to 132 to 147 (YNSAVDLDWLPDFFPV). The chain crosses the membrane as a helical span at residues 148-168 (LRASPLPYQLTAPALALLLVF). The Lumenal, thylakoid portion of the chain corresponds to 169–315 (RTEASYSRFE…PLSYTRLTSR (147 aa)). Helical transmembrane passes span 316 to 336 (FLVL…HWNV) and 337 to 357 (VPAT…GVLI). The Lumenal, thylakoid portion of the chain corresponds to 358–410 (EEPFSMLALDELCAMVLSNSDEAVESKEVIRNRIIAKKRILEIKHSSNGWHKS).

This sequence belongs to the anion channel-forming bestrophin (TC 1.A.46) family. Voltage-dependent chloride channel subfamily. Mostly expressed in flowers and, to a lower extent, in leaves, stems and roots.

The protein resides in the plastid. It is found in the chloroplast thylakoid membrane. It carries out the reaction chloride(in) = chloride(out). In terms of biological role, voltage-dependent chloride (Cl) channel probably contributing to proton motive force (PMF) partitioning across the thylakoid membrane by anion influx into the lumen. Influences thylakoid ultrastructure, including lumen size and organization. The sequence is that of Voltage-dependent chloride channel 2, chloroplastic from Arabidopsis thaliana (Mouse-ear cress).